The sequence spans 429 residues: Glutamate-1-semialdehyde 2,1-aminomutase (429 aa).

Lysine 267 carries the N6-(pyridoxal phosphate)lysine modification.

Belongs to the class-III pyridoxal-phosphate-dependent aminotransferase family. HemL subfamily. As to quaternary structure, homodimer. Pyridoxal 5'-phosphate is required as a cofactor.

It is found in the cytoplasm. It carries out the reaction (S)-4-amino-5-oxopentanoate = 5-aminolevulinate. It participates in porphyrin-containing compound metabolism; protoporphyrin-IX biosynthesis; 5-aminolevulinate from L-glutamyl-tRNA(Glu): step 2/2. The sequence is that of Glutamate-1-semialdehyde 2,1-aminomutase from Xanthomonas oryzae pv. oryzae (strain PXO99A).